Here is a 170-residue protein sequence, read N- to C-terminus: MPQNQSDIRRVFLHTGDAYLGVKPTIVSTVLGSCVAISMFSPRKRQGIICHAFLPSRAEIKDVNEPSIQICRYVDTAVDHLLKSMRRLGVRKNELEVKLFGGATGLSYSQVRPSCALGIGNRNVDAALENLEAKGLKPVSMDVGGNVGRKLLFCTYSGDVWIKRLEKHMF.

It belongs to the CheD family.

The enzyme catalyses L-glutaminyl-[protein] + H2O = L-glutamyl-[protein] + NH4(+). Probably deamidates glutamine residues to glutamate on methyl-accepting chemotaxis receptors (MCPs), playing an important role in chemotaxis. The sequence is that of Probable chemoreceptor glutamine deamidase CheD from Maridesulfovibrio salexigens (strain ATCC 14822 / DSM 2638 / NCIMB 8403 / VKM B-1763) (Desulfovibrio salexigens).